Reading from the N-terminus, the 106-residue chain is RNA-binding protein Hfq (106 aa).

A Sm domain is found at 9–68 (DPYLNALRKERVPVSIYLVNGIKLQGQIESFDAFVILLRNNISQMVYKHAVSTIVPSRNI). The segment at 78–106 (EDEAGEEISAEYTPNAEGQAEATADPLYD) is disordered.

It belongs to the Hfq family. In terms of assembly, homohexamer.

Its function is as follows. RNA chaperone that binds small regulatory RNA (sRNAs) and mRNAs to facilitate mRNA translational regulation in response to envelope stress, environmental stress and changes in metabolite concentrations. Also binds with high specificity to tRNAs. In Dichelobacter nodosus (strain VCS1703A), this protein is RNA-binding protein Hfq.